Here is a 415-residue protein sequence, read N- to C-terminus: Putative F-box protein At5g40050 (415 aa).

The 47-residue stretch at 13-59 (IDSISPLPDELLSHILSFLPTKRAASTSILSKRWRTLFPLMNHLCAS) folds into the F-box domain.

The protein is Putative F-box protein At5g40050 of Arabidopsis thaliana (Mouse-ear cress).